Here is a 149-residue protein sequence, read N- to C-terminus: Secreted RxLR effector protein 47 (149 aa).

The first 22 residues, 1-22 (MICLLPLIAVMLFVFATHTVLA), serve as a signal peptide directing secretion. The RxLR-dEER signature appears at 57-79 (RFLRQETTFEEKPSVNDVHAEER).

This sequence belongs to the RxLR effector family.

It is found in the secreted. The protein localises to the host membrane. Secreted effector that completely suppresses the host cell death induced by cell death-inducing proteins. The protein is Secreted RxLR effector protein 47 of Plasmopara viticola (Downy mildew of grapevine).